A 269-amino-acid chain; its full sequence is Energy-coupling factor transporter transmembrane protein EcfT (269 aa).

The next 5 membrane-spanning stretches (helical) occupy residues 28-48, 49-69, 73-93, 109-129, and 246-266; these read MIIYIIIIFWANNVVTNLLLL, AFTLLLIFLSQIKWSFFFNGV, IGIILFTTLFQVFFTQGGSVL, AILIFMRFVLIIFFSTLLTLT, and TLAIILVVILGIFLFCLKSPS.

It belongs to the energy-coupling factor EcfT family. In terms of assembly, forms a stable energy-coupling factor (ECF) transporter complex composed of 2 membrane-embedded substrate-binding proteins (S component), 2 ATP-binding proteins (A component) and 2 transmembrane proteins (T component). May be able to interact with more than 1 S component at a time.

The protein localises to the cell membrane. Its function is as follows. Transmembrane (T) component of an energy-coupling factor (ECF) ABC-transporter complex. Unlike classic ABC transporters this ECF transporter provides the energy necessary to transport a number of different substrates. The chain is Energy-coupling factor transporter transmembrane protein EcfT from Streptococcus equi subsp. equi (strain 4047).